A 605-amino-acid chain; its full sequence is uncharacterized protein (605 aa).

2 disordered regions span residues 10-78 and 216-248; these read RRGG…FPPA and RAPD…VRNP. Positions 20–48 are enriched in low complexity; sequence AGGRPAAGGRPAAGGRPAAGSRAAAGAAG. Residues 220–233 show a composition bias toward pro residues; the sequence is CPSPRTPMVKPPFR.

This is an uncharacterized protein from Dryophytes versicolor (chameleon treefrog).